Here is a 370-residue protein sequence, read N- to C-terminus: GTPase Obg (370 aa).

The 159-residue stretch at 1-159 (MKFIDEARIE…RMVRLELKVL (159 aa)) folds into the Obg domain. The interval 127–147 (NLHFKSSTNRAPRQKTDGKPG) is disordered. An OBG-type G domain is found at 160 to 334 (ADVGLLGMPN…LCYAVYDYLA (175 aa)). GTP-binding positions include 166 to 173 (GMPNAGKS), 191 to 195 (FTTLA), 213 to 216 (DIPG), 284 to 287 (NKLD), and 315 to 317 (SAL). The Mg(2+) site is built by serine 173 and threonine 193.

The protein belongs to the TRAFAC class OBG-HflX-like GTPase superfamily. OBG GTPase family. In terms of assembly, monomer. Mg(2+) is required as a cofactor.

The protein localises to the cytoplasm. In terms of biological role, an essential GTPase which binds GTP, GDP and possibly (p)ppGpp with moderate affinity, with high nucleotide exchange rates and a fairly low GTP hydrolysis rate. Plays a role in control of the cell cycle, stress response, ribosome biogenesis and in those bacteria that undergo differentiation, in morphogenesis control. This is GTPase Obg from Paraburkholderia phymatum (strain DSM 17167 / CIP 108236 / LMG 21445 / STM815) (Burkholderia phymatum).